A 378-amino-acid polypeptide reads, in one-letter code: O-methyltransferase gsfD (378 aa).

S-adenosyl-L-methionine is bound by residues 219–220 (GG), Asp-244, 266–267 (DM), and Arg-282. Catalysis depends on His-286, which acts as the Proton acceptor.

Belongs to the class I-like SAM-binding methyltransferase superfamily. Cation-independent O-methyltransferase family.

It carries out the reaction desmethyl-dehydrogriseofulvin + S-adenosyl-L-methionine = dehydrogriseofulvin + S-adenosyl-L-homocysteine + H(+). Its pathway is secondary metabolite biosynthesis; terpenoid biosynthesis. Functionally, O-methyltransferase; part of the gene cluster that mediates the biosynthesis of griseofulvin, an important antifungal drug that has been in use for a long time for treating dermatophyte infections. The first step of the pathway is the formation of the heptaketide backbone by gsfA which is initiated by priming with acetyl-CoA, followed by sequential condensations of 6 malonyl-CoA units. The resulting benzophenone can undergo a spontaneous dehydration to form norlichexanthone. However, the true precursor for the griseofulvin biosynthesis is not norlichexanthone, but the heptaketide benzophenone that is O-methylated at 3-OH by gsfB to produce griseophenone D which is further methylated at 9-OH by gsfC to yield griseophenone C. Griseophenone C is then substrate of halogenase gsfI which is responsible for the regio-specific chlorination at the C13 position to form griseophenone B. The cytochrome P450 gsfF catalyzes the coupling of orcinol and phloroglucinol rings in griseophenone B to form desmethyl-dehydrogriseofulvin A which is further methylated at 5-OH by gsfD to yield dehydrogriseofulvin. Finally, gsfE performs stereospecific reduction of enone 18 of dehydrogriseofulvin to afford the final product griseofulvin. This chain is O-methyltransferase gsfD, found in Penicillium aethiopicum.